Consider the following 290-residue polypeptide: ATP synthase gamma chain (290 aa).

Belongs to the ATPase gamma chain family. F-type ATPases have 2 components, CF(1) - the catalytic core - and CF(0) - the membrane proton channel. CF(1) has five subunits: alpha(3), beta(3), gamma(1), delta(1), epsilon(1). CF(0) has three main subunits: a, b and c.

It is found in the cell membrane. In terms of biological role, produces ATP from ADP in the presence of a proton gradient across the membrane. The gamma chain is believed to be important in regulating ATPase activity and the flow of protons through the CF(0) complex. The protein is ATP synthase gamma chain of Rubrobacter xylanophilus (strain DSM 9941 / JCM 11954 / NBRC 16129 / PRD-1).